The sequence spans 118 residues: 5-hydroxyisourate hydrolase (118 aa).

The substrate site is built by His7, Arg46, and Tyr115.

This sequence belongs to the transthyretin family. 5-hydroxyisourate hydrolase subfamily. As to quaternary structure, homotetramer.

The catalysed reaction is 5-hydroxyisourate + H2O = 5-hydroxy-2-oxo-4-ureido-2,5-dihydro-1H-imidazole-5-carboxylate + H(+). Its function is as follows. Catalyzes the hydrolysis of 5-hydroxyisourate (HIU) to 2-oxo-4-hydroxy-4-carboxy-5-ureidoimidazoline (OHCU). This chain is 5-hydroxyisourate hydrolase, found in Brucella suis biovar 1 (strain 1330).